We begin with the raw amino-acid sequence, 77 residues long: Large ribosomal subunit protein bL28 (77 aa).

The tract at residues 1–25 (MARVCQVTGKAPMSGNNVSHANNKT) is disordered.

This sequence belongs to the bacterial ribosomal protein bL28 family.

The chain is Large ribosomal subunit protein bL28 from Paraburkholderia xenovorans (strain LB400).